Consider the following 298-residue polypeptide: MTYSTTKSVAMNPDEDAPPSDINSSGRLMSHSEVEPRGNGYEVLQQAGTVRILLSRPERGNALSLSLARDLTRLFQTFSAQHSVHRIVLTGKGKYFCSGMDLGEELYEDATERCLALQDLFGAIDACPKTTVAVINGPAFGGGVGLAFVCDIRVAVSTSFFCLSEVKLGLCPATVSRFIIREWGVSLARMAMLTARKIHPQALQEMGVLHAVALDEEALKVVTENLLDDLGFAAPQASAWCKALTRKTRNGNGDHDQFARQIFETMVAPGSESEYGVAQFRRGRKNIRWEQAECLHTR.

The tract at residues 1–39 (MTYSTTKSVAMNPDEDAPPSDINSSGRLMSHSEVEPRGN) is disordered.

It belongs to the enoyl-CoA hydratase/isomerase family.

It catalyses the reaction a (3S)-3-hydroxyacyl-CoA = a (2E)-enoyl-CoA + H2O. The catalysed reaction is a 4-saturated-(3S)-3-hydroxyacyl-CoA = a (3E)-enoyl-CoA + H2O. The protein operates within mycotoxin biosynthesis. Functionally, enoyl-CoA hydratase; part of the gene clusters that mediate the biosynthesis of the host-selective toxins (HSTs) AF-toxins responsible for Alternaria black spot of strawberry disease by the strawberry pathotype. AF-toxin I and III are valine derivatives of 2,3-dyhydroxy-isovaleric acid and 2-hydroxy-isovaleric acid respectively, while AF II is an isoleucine derivative of 2-hydroxy-valeric acid. These derivatives are bound to a 9,10-epoxy-8-hydroxy-9-methyl-decatrienoic acid (EDA) moiety. On cellular level, AF-toxin affects plasma membrane of susceptible cells and cause a sudden increase in loss of K(+) after a few minutes of toxin treatment. The aldo-keto reductase AFTS1 catalyzes the conversion of 2-keto-isovaleric acid (2-KIV) to 2-hydroxy-isovaleric acid (2-HIV) by reduction of its ketone to an alcohol. The acyl-CoA ligase AFT1, the hydrolase AFT2 and the enoyl-CoA hydratases AFT3 and AFT6, but also the polyketide synthase AFT9, the acyl-CoA dehydrogenase AFT10, the cytochrome P450 monooxygenase AFT11 and the oxidoreductase AFT12 are all involved in the biosynthesis of the AK-, AF- and ACT-toxin common EDA structural moiety. The exact function of each enzyme, and of additional enzymes identified within the AF-toxin clusters have still to be determined. The sequence is that of Enoyl-CoA hydratase AFT6-1 from Alternaria alternata (Alternaria rot fungus).